Consider the following 108-residue polypeptide: Large ribosomal subunit protein bL21c (108 aa).

Belongs to the bacterial ribosomal protein bL21 family. Part of the 50S ribosomal subunit.

The protein localises to the plastid. It is found in the chloroplast. This protein binds to 23S rRNA. This is Large ribosomal subunit protein bL21c from Cyanidium caldarium (Red alga).